The sequence spans 420 residues: Glutamate dehydrogenase (420 aa).

Lysine 105 is an active-site residue. Glycine 220–tyrosine 226 lines the NAD(+) pocket.

Belongs to the Glu/Leu/Phe/Val dehydrogenases family. In terms of assembly, homohexamer.

The protein resides in the cytoplasm. The catalysed reaction is L-glutamate + NAD(+) + H2O = 2-oxoglutarate + NH4(+) + NADH + H(+). It catalyses the reaction L-glutamate + NADP(+) + H2O = 2-oxoglutarate + NH4(+) + NADPH + H(+). The protein is Glutamate dehydrogenase (gdhA) of Pyrococcus abyssi (strain GE5 / Orsay).